The following is a 245-amino-acid chain: 1-(5-phosphoribosyl)-5-[(5-phosphoribosylamino)methylideneamino] imidazole-4-carboxamide isomerase (245 aa).

Asp7 (proton acceptor) is an active-site residue. Residue Asp129 is the Proton donor of the active site.

Belongs to the HisA/HisF family.

It is found in the cytoplasm. The catalysed reaction is 1-(5-phospho-beta-D-ribosyl)-5-[(5-phospho-beta-D-ribosylamino)methylideneamino]imidazole-4-carboxamide = 5-[(5-phospho-1-deoxy-D-ribulos-1-ylimino)methylamino]-1-(5-phospho-beta-D-ribosyl)imidazole-4-carboxamide. It functions in the pathway amino-acid biosynthesis; L-histidine biosynthesis; L-histidine from 5-phospho-alpha-D-ribose 1-diphosphate: step 4/9. This chain is 1-(5-phosphoribosyl)-5-[(5-phosphoribosylamino)methylideneamino] imidazole-4-carboxamide isomerase, found in Tolumonas auensis (strain DSM 9187 / NBRC 110442 / TA 4).